A 356-amino-acid chain; its full sequence is Putative zinc finger protein At1g68190 (356 aa).

Residues Cys-14, Cys-17, Cys-37, His-42, Cys-57, Cys-60, Cys-80, and His-85 each contribute to the Zn(2+) site. The segment at 14–56 adopts a B box-type 1; atypical zinc-finger fold; sequence CEFCKAYRAVVYCIADTANLCLTCDAKVHSANSLSGRHLRTVL. Residues 57 to 97 form a B box-type 2; atypical zinc finger; the sequence is CDSCKNQPCVVRCFDHKMFLCHGCNDKFHGGGSSEHRRRDL. Residues 159 to 178 form a disordered region; sequence ENGSSSLTERGDPSPLELPK.

This sequence belongs to the CONSTANS family.

Its subcellular location is the nucleus. The polypeptide is Putative zinc finger protein At1g68190 (Arabidopsis thaliana (Mouse-ear cress)).